Reading from the N-terminus, the 189-residue chain is Putative manganese efflux pump MntP (189 aa).

A run of 6 helical transmembrane segments spans residues 3-23 (LSATLILAFGMSMDAFAASIG), 41-61 (LIFGVVEAITPIIGWGIGLFA), 65-85 (IMEWDHWVAFSLLFILGMRMI), 103-123 (GFWLLVATAIATSLDAMAIGV), 132-152 (IVHTAMAIGCATMIMATLGMM), and 167-187 (ILGGVVLIGIGVNILLEHLGY).

Belongs to the MntP (TC 9.B.29) family.

It is found in the cell inner membrane. Functionally, probably functions as a manganese efflux pump. The sequence is that of Putative manganese efflux pump MntP from Serratia proteamaculans (strain 568).